The sequence spans 243 residues: Orotidine 5'-phosphate decarboxylase (243 aa).

Residues aspartate 16, lysine 38, 65 to 74, threonine 120, arginine 181, glutamine 190, glycine 210, and arginine 211 contribute to the substrate site; that span reads DLKLHDIPNT. The active-site Proton donor is lysine 67.

This sequence belongs to the OMP decarboxylase family. Type 1 subfamily. Homodimer.

It carries out the reaction orotidine 5'-phosphate + H(+) = UMP + CO2. It participates in pyrimidine metabolism; UMP biosynthesis via de novo pathway; UMP from orotate: step 2/2. In terms of biological role, catalyzes the decarboxylation of orotidine 5'-monophosphate (OMP) to uridine 5'-monophosphate (UMP). The protein is Orotidine 5'-phosphate decarboxylase of Bradyrhizobium sp. (strain ORS 278).